Consider the following 313-residue polypeptide: Formimidoylglutamase (313 aa).

The Mn(2+) site is built by histidine 130, aspartate 155, histidine 157, aspartate 159, aspartate 241, and aspartate 243.

The protein belongs to the arginase family. It depends on Mn(2+) as a cofactor.

It carries out the reaction N-formimidoyl-L-glutamate + H2O = formamide + L-glutamate. It participates in amino-acid degradation; L-histidine degradation into L-glutamate; L-glutamate from N-formimidoyl-L-glutamate (hydrolase route): step 1/1. Catalyzes the conversion of N-formimidoyl-L-glutamate to L-glutamate and formamide. This Salmonella arizonae (strain ATCC BAA-731 / CDC346-86 / RSK2980) protein is Formimidoylglutamase.